The sequence spans 707 residues: Lipase maturation factor 2 (707 aa).

A run of 9 helical transmembrane segments spans residues 11-31, 78-98, 102-122, 126-146, 220-240, 256-276, 306-326, 358-378, and 398-418; these read FLWGLSGIYLVAFVSLYAQIP, MEMICLLGALLSLGALLFSFL, LVFLLLWIFYLSLYQVGQVFL, WDSLLLETGFLAVLVAPVHAL, FSVVATYFIEIGVPLLFFLPF, ILIIMTGNYNFFNLLTVVLCC, LYSLISLLDVPIFGLLVFWTV, ITFPTIWIAAASLGWEILKGM, and VIFSCAAVAMFTISLVPYTYI. An N-linked (GlcNAc...) asparagine glycan is attached at Asn483. Residues 634–654 traverse the membrane as a helical segment; the sequence is LLLHSFIFGIFTIYFLQAMFG. A disordered region spans residues 659–707; it reads PGVAKQRHSKPPNEKKKQKSNSGQGESAAAKSSGHGADTVRRNKKNEKS. The span at 696–707 shows a compositional bias: basic and acidic residues; the sequence is DTVRRNKKNEKS.

The protein belongs to the lipase maturation factor family.

The protein localises to the endoplasmic reticulum membrane. Involved in the maturation of specific proteins in the endoplasmic reticulum. In Xenopus tropicalis (Western clawed frog), this protein is Lipase maturation factor 2 (lmf2).